An 871-amino-acid chain; its full sequence is Alanine--tRNA ligase (871 aa).

4 residues coordinate Zn(2+): histidine 561, histidine 565, cysteine 665, and histidine 669.

This sequence belongs to the class-II aminoacyl-tRNA synthetase family. The cofactor is Zn(2+).

It localises to the cytoplasm. It catalyses the reaction tRNA(Ala) + L-alanine + ATP = L-alanyl-tRNA(Ala) + AMP + diphosphate. Its function is as follows. Catalyzes the attachment of alanine to tRNA(Ala) in a two-step reaction: alanine is first activated by ATP to form Ala-AMP and then transferred to the acceptor end of tRNA(Ala). Also edits incorrectly charged Ser-tRNA(Ala) and Gly-tRNA(Ala) via its editing domain. This is Alanine--tRNA ligase from Dehalococcoides mccartyi (strain ATCC BAA-2100 / JCM 16839 / KCTC 5957 / BAV1).